The primary structure comprises 354 residues: MAETDKQKALSAALSQIEKQFGKGSIMRMNETQVNDNLQVISTGSLGLDMALGVGGLPRGRVVEIYGPESSGKTTLCLQVVAEAQKLGGTCAYIDAENALDPVYAGKLGVKVDDLLVSQPDTGEQALEICDMLVRSGGVDVIVVDSVAALVPKAEIEGEMGDSHVGLQARLMSQALRKLTGNIKRTNTLVIFINQIRMKIGVMFGNPETTTGGNALKFYASVRLDIRRIGAIKKTDEIIGNETRVKVVKNKVSPPFKQAEFDILYGEGISREGEIIEMGVANKFVDKSGAWYAYNGQKIGQGKDNAREWLRENPAIAQEIEKKIRTAAGVGGMNEFVPSSEEQAEASLSEDHDQ.

67–74 (GPESSGKT) is an ATP binding site. Residues 333 to 354 (MNEFVPSSEEQAEASLSEDHDQ) form a disordered region.

This sequence belongs to the RecA family.

It is found in the cytoplasm. In terms of biological role, can catalyze the hydrolysis of ATP in the presence of single-stranded DNA, the ATP-dependent uptake of single-stranded DNA by duplex DNA, and the ATP-dependent hybridization of homologous single-stranded DNAs. It interacts with LexA causing its activation and leading to its autocatalytic cleavage. This Laribacter hongkongensis (strain HLHK9) protein is Protein RecA.